The chain runs to 259 residues: Protein LEAD-SENSITIVE 1 (259 aa).

An LRAT domain is found at 20-168 (YSWRTAYIYA…CKTALLVLEG (149 aa)). Active-site residues include H30 and H42. The active-site Acyl-thioester intermediate is C152.

As to expression, highly expressed in inflorescences, siliques and stems, and, to a lower extent, in roots and leaves.

The protein resides in the cytoplasm. Confers tolerance to lead ions (Pb) stress mediated by Pb(NO(3))(2) probably by promoting Pb accumulation leading to subsequent glutathione-dependent phytochelatin (PC) synthesis and related gene expression, including PDR12/ABCG40, GSH1, GSH2, GR1, GR2, PCS1 and PCS2. In Arabidopsis thaliana (Mouse-ear cress), this protein is Protein LEAD-SENSITIVE 1.